The primary structure comprises 255 residues: 4-diphosphocytidyl-2-C-methyl-D-erythritol kinase (255 aa).

Residue Lys-9 is part of the active site. Residue 95–105 (PSQAGLGGGSS) participates in ATP binding. Residue Asp-137 is part of the active site.

Belongs to the GHMP kinase family. IspE subfamily.

The catalysed reaction is 4-CDP-2-C-methyl-D-erythritol + ATP = 4-CDP-2-C-methyl-D-erythritol 2-phosphate + ADP + H(+). It participates in isoprenoid biosynthesis; isopentenyl diphosphate biosynthesis via DXP pathway; isopentenyl diphosphate from 1-deoxy-D-xylulose 5-phosphate: step 3/6. Catalyzes the phosphorylation of the position 2 hydroxy group of 4-diphosphocytidyl-2C-methyl-D-erythritol. The protein is 4-diphosphocytidyl-2-C-methyl-D-erythritol kinase of Sulfurovum sp. (strain NBC37-1).